Reading from the N-terminus, the 920-residue chain is Nitrate reductase [NADH] (920 aa).

Residues 1–69 (MAASVENRQF…DTSDDEEDEA (69 aa)) form a disordered region. Over residues 60–69 (DTSDDEEDEA) the composition is skewed to acidic residues. Position 185 (cysteine 185) interacts with Mo-molybdopterin. The 76-residue stretch at 534-609 (SLTFTMSEVK…LEEYRVGELI (76 aa)) folds into the Cytochrome b5 heme-binding domain. Heme-binding residues include histidine 569 and histidine 592. In terms of domain architecture, FAD-binding FR-type spans 663–775 (REKIPCKLIS…KGPLGHIEYM (113 aa)). Residues 715-718 (RAYT), 732-736 (LVKIY), phenylalanine 737, phenylalanine 744, 749-751 (LMS), and threonine 802 each bind FAD.

It belongs to the nitrate reductase family. As to quaternary structure, homodimer. It depends on FAD as a cofactor. Requires heme as cofactor. Mo-molybdopterin serves as cofactor. In cortical cells of roots grown at low nitrate concentrations, in vascular tissues of roots at high nitrate concentrations and in root apex under both conditions.

It catalyses the reaction nitrite + NAD(+) + H2O = nitrate + NADH + H(+). Its function is as follows. Nitrate reductase is a key enzyme involved in the first step of nitrate assimilation in plants, fungi and bacteria. This Cichorium intybus (Chicory) protein is Nitrate reductase [NADH] (NIA).